We begin with the raw amino-acid sequence, 103 residues long: Cyclotide vibi-K (103 aa).

Positions 1-9 are cleaved as a signal peptide; it reads AAFALPAFA. Positions 10–69 are excised as a propeptide; that stretch reads SFEKDVITPSVLEAVLNRKAPLSNIMMENDAILNVIANVKTVISNPVLEEALLKTNHGVN. The segment at residues 70–99 is a cross-link (cyclopeptide (Gly-Asn)); it reads GIPCGESCVWIPCLTSAVGCPCKSKVCYRN. Cystine bridges form between Cys73–Cys89, Cys77–Cys91, and Cys82–Cys96. Positions 100 to 103 are excised as a propeptide; that stretch reads SLDN.

This is a cyclic peptide.

Probably participates in a plant defense mechanism. The sequence is that of Cyclotide vibi-K from Viola biflora (Yellow wood violet).